Here is a 785-residue protein sequence, read N- to C-terminus: Phenylalanine--tRNA ligase beta subunit (785 aa).

A tRNA-binding domain is found at 39–147; sequence FPIPRGVVFA…DALPPGTPLS (109 aa). One can recognise a B5 domain in the interval 399–474; it reads KPPEAIPFRP…RIQGYETIPL (76 aa). Mg(2+) contacts are provided by Asp-452, Asp-458, Glu-461, and Glu-462. An FDX-ACB domain is found at 688 to 780; that stretch reads SRHPAAFRDL…ALRARGFGLR (93 aa).

The protein belongs to the phenylalanyl-tRNA synthetase beta subunit family. Type 1 subfamily. Tetramer of two alpha and two beta subunits. It depends on Mg(2+) as a cofactor.

Its subcellular location is the cytoplasm. The enzyme catalyses tRNA(Phe) + L-phenylalanine + ATP = L-phenylalanyl-tRNA(Phe) + AMP + diphosphate + H(+). The sequence is that of Phenylalanine--tRNA ligase beta subunit (pheT) from Thermus thermophilus (strain ATCC 27634 / DSM 579 / HB8).